Reading from the N-terminus, the 188-residue chain is Adenine phosphoribosyltransferase (188 aa).

It belongs to the purine/pyrimidine phosphoribosyltransferase family. As to quaternary structure, homodimer.

Its subcellular location is the cytoplasm. It carries out the reaction AMP + diphosphate = 5-phospho-alpha-D-ribose 1-diphosphate + adenine. It functions in the pathway purine metabolism; AMP biosynthesis via salvage pathway; AMP from adenine: step 1/1. Functionally, catalyzes a salvage reaction resulting in the formation of AMP, that is energically less costly than de novo synthesis. The polypeptide is Adenine phosphoribosyltransferase (Neisseria meningitidis serogroup A / serotype 4A (strain DSM 15465 / Z2491)).